We begin with the raw amino-acid sequence, 424 residues long: Serine hydroxymethyltransferase 2 (424 aa).

(6S)-5,6,7,8-tetrahydrofolate contacts are provided by residues L125 and 129-131 (GHL). K234 bears the N6-(pyridoxal phosphate)lysine mark. Residue E250 participates in (6S)-5,6,7,8-tetrahydrofolate binding.

It belongs to the SHMT family. Homodimer. Requires pyridoxal 5'-phosphate as cofactor.

Its subcellular location is the cytoplasm. The catalysed reaction is (6R)-5,10-methylene-5,6,7,8-tetrahydrofolate + glycine + H2O = (6S)-5,6,7,8-tetrahydrofolate + L-serine. Its pathway is one-carbon metabolism; tetrahydrofolate interconversion. It functions in the pathway amino-acid biosynthesis; glycine biosynthesis; glycine from L-serine: step 1/1. Functionally, catalyzes the reversible interconversion of serine and glycine with tetrahydrofolate (THF) serving as the one-carbon carrier. This reaction serves as the major source of one-carbon groups required for the biosynthesis of purines, thymidylate, methionine, and other important biomolecules. Also exhibits THF-independent aldolase activity toward beta-hydroxyamino acids, producing glycine and aldehydes, via a retro-aldol mechanism. The protein is Serine hydroxymethyltransferase 2 of Ralstonia nicotianae (strain ATCC BAA-1114 / GMI1000) (Ralstonia solanacearum).